A 699-amino-acid polypeptide reads, in one-letter code: Fervidolysin (699 aa).

The N-terminal stretch at 1–21 is a signal peptide; it reads MRKVLLIASIVALILALFSCA. The propeptide occupies 22–149; it reads NPSFEPRSKA…MYKIRKPGLN (128 aa). E157 lines the Ca(2+) pocket. One can recognise a Peptidase S8 domain in the interval 163-465; that stretch reads LWGLEAIGVT…YGLVKLDAAL (303 aa). The active-site Charge relay system is D190. Position 199 (D199) interacts with Ca(2+). The Charge relay system role is filled by H228. The Ca(2+) site is built by K239, D241, K243, and I245. S409 (charge relay system) is an active-site residue.

This sequence belongs to the peptidase S8 family. In terms of processing, undergoes auto-proteolytic processing. Once cleaved, the propeptide can remain associated with the protease and blocks its activity. The physiological activation of fervidolysin is proposed to be achieved through the stepwise removal of the propeptide accomplished by several proteolytic cleavages that may not be autolytic.

It localises to the cell surface. Is inhibited by phenylmethylsulfonyl fluoride and 3,4-dichloroisocoumarin. EDTA and iodoacetate (1 to 5 mM) have only little effect on the enzyme activity. Its function is as follows. Protease able to degrade keratin into peptides. Is responsible for keratinolysis by F.pennivorans, which allows this bacterium to grow on native feathers. This chain is Fervidolysin, found in Fervidobacterium pennivorans.